The following is a 500-amino-acid chain: 7-alpha-hydroxycholest-4-en-3-one 12-alpha-hydroxylase (500 aa).

Residues 4–24 form a helical membrane-spanning segment; it reads WCTVLGALLTVVGCLCLSLLL. Serine 325 carries the post-translational modification Phosphoserine. Cysteine 439 contacts heme.

Belongs to the cytochrome P450 family. It depends on heme as a cofactor. As to expression, expressed in liver.

It localises to the endoplasmic reticulum membrane. It is found in the microsome membrane. It catalyses the reaction 7alpha-hydroxycholest-4-en-3-one + reduced [NADPH--hemoprotein reductase] + O2 = 7alpha,12alpha-dihydroxycholest-4-en-3-one + oxidized [NADPH--hemoprotein reductase] + H2O + H(+). The catalysed reaction is 5beta-cholestane-3alpha,7alpha-diol + reduced [NADPH--hemoprotein reductase] + O2 = 5beta-cholestane-3alpha,7alpha,12alpha-triol + oxidized [NADPH--hemoprotein reductase] + H2O + H(+). It carries out the reaction chenodeoxycholate + reduced [NADPH--hemoprotein reductase] + O2 = cholate + oxidized [NADPH--hemoprotein reductase] + H2O + H(+). It functions in the pathway lipid metabolism; bile acid biosynthesis. Functionally, a cytochrome P450 monooxygenase involved in primary bile acid biosynthesis. Catalyzes the 12alpha-hydroxylation of 7alpha-hydroxy-4-cholesten-3-one, an intermediate metabolite in cholic acid biosynthesis. Controls biliary balance of cholic acid and chenodeoxycholic acid, ultimately regulating the intestinal absorption of dietary lipids. Mechanistically, uses molecular oxygen inserting one oxygen atom into a substrate, and reducing the second into a water molecule, with two electrons provided by NADPH via cytochrome P450 reductase (CPR; NADPH--hemoprotein reductase). This Mus musculus (Mouse) protein is 7-alpha-hydroxycholest-4-en-3-one 12-alpha-hydroxylase (Cyp8b1).